Consider the following 69-residue polypeptide: UPF0346 protein YuiB (69 aa).

This sequence belongs to the UPF0346 family.

This chain is UPF0346 protein YuiB (yuiB), found in Lactococcus lactis subsp. lactis (strain IL1403) (Streptococcus lactis).